Reading from the N-terminus, the 562-residue chain is Protein wntless (562 aa).

The Cytoplasmic portion of the chain corresponds to 1–13 (MSGTILENLSGRK). A helical transmembrane segment spans residues 14–34 (LSILVGSLLLCQVLCFLLGGL). Residues 35 to 239 (YAPVPAGHTN…AIHQNGGFTH (205 aa)) are Lumenal-facing. N-linked (GlcNAc...) asparagine glycosylation is present at asparagine 58. Residues 240-260 (VWLMLKTLLFPFVVGIMVWFW) traverse the membrane as a helical segment. The Cytoplasmic portion of the chain corresponds to 261 to 270 (RRVHLLQRSP). A helical membrane pass occupies residues 271–291 (ALLEYMLLYLGGALTFLNLPL). Residues 292-311 (EYLSLTIEMPYMLLLSDIRQ) are Lumenal-facing. Residues 312-332 (GIFYAMLLSFWLVFAGEHMLI) form a helical membrane-spanning segment. Residues 333-344 (QDSSNKSTIRSR) are Cytoplasmic-facing. Residues 345-365 (YWKHLSAVVVGCISLFVFDIS) traverse the membrane as a helical segment. At 366-386 (ERGVQLRNPFYSIWTTPLGAK) the chain is on the lumenal side. A helical transmembrane segment spans residues 387 to 407 (VAMSFILLAGVSAAVYFLFLC). Topologically, residues 408-441 (YMISKVFKNIGDKRTSLPSMSQARRLHYEGLIYR) are cytoplasmic. The helical transmembrane segment at 442-462 (FKFLMLATLLCAALTVTGFIM) threads the bilayer. The Lumenal portion of the chain corresponds to 463–482 (GQMAEGQWKWNDDVEIQLTS). The chain crosses the membrane as a helical span at residues 483 to 503 (AFLTGVYGMWNIYIFALLILY). The Cytoplasmic segment spans residues 504–562 (APSHKQWPTMHHSDETTQSNENIVASAASEEIEFSNLPSDSNPSEISSLTSFTRKVAFE). Residues 538 to 562 (SNLPSDSNPSEISSLTSFTRKVAFE) are disordered. Over residues 539 to 556 (NLPSDSNPSEISSLTSFT) the composition is skewed to polar residues.

The protein belongs to the wntless family. As to quaternary structure, interacts with wg; in the Golgi. Interacts with Vps35, a component of the retromer complex; wls stability is regulated by Vps35.

It is found in the presynaptic cell membrane. The protein localises to the postsynaptic cell membrane. It localises to the cell membrane. The protein resides in the endoplasmic reticulum membrane. Its subcellular location is the endosome membrane. It is found in the golgi apparatus membrane. Functionally, a segment polarity gene required for wingless (wg)-dependent patterning processes, acting in both wg-sending cells and wg-target cells. In non-neuronal cells wls directs wg secretion. The wls traffic loop encompasses the Golgi, the cell surface, an endocytic compartment and a retrograde route leading back to the Golgi, and involves clathrin-mediated endocytosis and the retromer complex (a conserved protein complex consisting of Vps35 and Vps26). In neuronal cells (the larval motorneuron NMJ), the wg signal moves across the synapse via the release of wls-containing exosome-like vesicles. Postsynaptic wls is required for the trafficking of fz2 through the fz2-interacting protein Grip. The chain is Protein wntless from Drosophila pseudoobscura pseudoobscura (Fruit fly).